The sequence spans 78 residues: RTX-VII (78 aa).

An N-terminal signal peptide occupies residues 1–22; the sequence is MKTIVYLIVSILLLSSTVLVLA. Positions 23–40 are excised as a propeptide; sequence EGNAASHELQEYPIEEQR. 4 disulfides stabilise this stretch: Cys42-Cys58, Cys47-Cys63, Cys57-Cys73, and Cys65-Cys71. Arg76 is modified (arginine amide).

In terms of tissue distribution, expressed by the venom gland.

It localises to the secreted. Functionally, agonist of rat Nav1.3/SCN3A. This toxin increases the peak current amplitude, and potently inhibits the fast inactivation of the channel (EC(50)=120 nM). The inhibition of fast inactivation is voltage-independent (depolarizing voltages ranging from 220 mV to 130 mV). The toxin might bind to the domain IV of the Nav1.3 channel, while domain II might not participate in interacting with the toxin but could determine the efficacy of RTX-VII. In vivo, when intracerebroventricularly injected into mice, the toxin causes involuntary body twitching (seizure-like symptoms). In Macrothele raveni (Funnel-web spider), this protein is RTX-VII.